The primary structure comprises 262 residues: Steroid 5-alpha-reductase DET2 (262 aa).

The next 6 helical transmembrane spans lie at 13 to 33 (CLLT…FLQA), 51 to 71 (IAWF…FPFG), 79 to 99 (SLLL…IYPL), 113 to 133 (FPIT…YIQA), 148 to 168 (WFWW…YINI), and 205 to 225 (AIEW…GFFL).

The protein belongs to the steroid 5-alpha reductase family.

The protein localises to the membrane. It catalyses the reaction a 3-oxo-5alpha-steroid + NADP(+) = a 3-oxo-Delta(4)-steroid + NADPH + H(+). It carries out the reaction 5alpha-campestan-3-one + NADP(+) = campest-4-en-3-one + NADPH + H(+). The enzyme catalyses (22S,24R)-22-hydroxy-5alpha-ergostan-3-one + NADP(+) = (22S)-22-hydroxycampest-4-en-3-one + NADPH + H(+). The catalysed reaction is 3-dehydro-6-deoxoteasterone + NADP(+) = (22R,23R)-22,23-dihydroxycampest-4-en-3-one + NADPH + H(+). Its pathway is plant hormone biosynthesis; brassinosteroid biosynthesis. Its activity is regulated as follows. Inhibited by the 4-azasteroids 4-MA. Functionally, involved in a reduction step in the biosynthesis of the plant steroid, brassinolide (BL); acts at the second step in brassinolide biosynthesis in the 5alpha-reduction of (24R)- 24-methylcholest-4-en-3-one, which is further modified to form campestanol. Can use progesterone, testosterone, androstenedione and campestenone as substrate. Also catalyzes the conversion of campest-4-en-3-one (campesta-4-en-3-one, 4-en-3-one) to campest-3-one (campesta-3-one, 3-one), of (22S,24R)-22-hydroxyergost-4-en-3-one (22-hydroxy-campesta-4-en-3-one, 22-OH-4-en-3-one) to (22S,24R)-22-hydroxy-5alpha-ergostan-3-one (22-hydroxy-campesta-3-one, 22-OH-3-one), and of (22R,23R)-22,23-dihydroxy-5alpha-campestan-3-one (22,23,diOH-4-en-3-one) to (22R,23R)-22,23-dihydroxycampest-4-en-3-one (6-deoxo3DT). Required for the brassinosteroid- (BR) dependent regulation of seed size and shape as well as embryo development. This is Steroid 5-alpha-reductase DET2 from Arabidopsis thaliana (Mouse-ear cress).